A 521-amino-acid polypeptide reads, in one-letter code: Spermidine transporter DUR31 (521 aa).

A helical transmembrane segment spans residues 11–31 (AIIYLSYAFMLATGLFLAWKF). Asparagine 41 carries N-linked (GlcNAc...) asparagine glycosylation. The next 12 helical transmembrane spans lie at 47-67 (IPLALNFVASAMGVGIITTYA), 79-99 (LVYTICGAIPIVGFAVVGPVI), 117-137 (FGMVTALYLSAFTCLTMFLFM), 156-176 (ALGAVIVECVVTTIYTFFGGF), 187-207 (GVCVLLLLIICAAGMGSYIEI), 227-247 (LVYILFVAIVTNDCFMSGFWL), 264-284 (IAAFVTFAICTLIGTTGFLAV), 310-330 (WLVAFVLIFCIVLSTCTFDSL), 354-374 (IMLILIMVPIVVLAVKVADNI), 377-397 (IYLIADLVSAAIIPSVFLGLA), 406-426 (GFDVMAGGLGALLGVFIFGTV), and 453-473 (FGAFVIAPVGGVIITLASAAL).

This sequence belongs to the sodium:solute symporter (SSF) (TC 2.A.21) family.

It localises to the membrane. The enzyme catalyses spermidine(in) = spermidine(out). In terms of biological role, spermidine transporter that is also used by salivary gland-secreted histatin 5 (Hst 5) to enter into candidal cells. A major component of host nonimmune defense systems is salivary histatins, a family of small (3-4 kDa), histidine-rich, cationic proteins secreted by major salivary glands in humans and higher primates. Hst 5 is the most potent of the 12 histatin family members and has fungicidal activity against blastoconidial and filamentous forms of Candida albicans. DUR31 only functions under high concentrations of Hst 5. Hst 5 cojugates to spermidine to be uptaken by DUR31. This chain is Spermidine transporter DUR31, found in Candida albicans (strain SC5314 / ATCC MYA-2876) (Yeast).